A 333-amino-acid polypeptide reads, in one-letter code: Ornithine carbamoyltransferase (333 aa).

Carbamoyl phosphate-binding positions include 56–59 (STRT), R107, and 134–137 (HPTQ). L-ornithine contacts are provided by residues N167, D231, and 235 to 236 (SM). Residues 273–274 (CL) and R318 contribute to the carbamoyl phosphate site.

It belongs to the aspartate/ornithine carbamoyltransferase superfamily. OTCase family.

The protein localises to the cytoplasm. It catalyses the reaction carbamoyl phosphate + L-ornithine = L-citrulline + phosphate + H(+). The protein operates within amino-acid degradation; L-arginine degradation via ADI pathway; carbamoyl phosphate from L-arginine: step 2/2. Reversibly catalyzes the transfer of the carbamoyl group from carbamoyl phosphate (CP) to the N(epsilon) atom of ornithine (ORN) to produce L-citrulline. The chain is Ornithine carbamoyltransferase from Clostridium botulinum (strain Langeland / NCTC 10281 / Type F).